The primary structure comprises 105 residues: uncharacterized protein (105 aa).

The helical transmembrane segment at 64–84 threads the bilayer; sequence ILLISIFFLLLFALPQHTMGI.

The protein localises to the membrane. This is an uncharacterized protein from Saccharomyces cerevisiae (strain ATCC 204508 / S288c) (Baker's yeast).